A 419-amino-acid polypeptide reads, in one-letter code: Peptide chain release factor subunit 1 (419 aa).

Belongs to the eukaryotic release factor 1 family. As to quaternary structure, heterodimer of two subunits, one of which binds GTP.

The protein resides in the cytoplasm. Directs the termination of nascent peptide synthesis (translation) in response to the termination codons UAA, UAG and UGA. The protein is Peptide chain release factor subunit 1 of Methanococcus vannielii (strain ATCC 35089 / DSM 1224 / JCM 13029 / OCM 148 / SB).